Consider the following 425-residue polypeptide: Enolase (425 aa).

Gln162 provides a ligand contact to (2R)-2-phosphoglycerate. Catalysis depends on Glu204, which acts as the Proton donor. Mg(2+)-binding residues include Asp241, Glu284, and Asp311. (2R)-2-phosphoglycerate-binding residues include Lys336, Arg365, Ser366, and Lys387. Lys336 serves as the catalytic Proton acceptor.

This sequence belongs to the enolase family. Requires Mg(2+) as cofactor.

It is found in the cytoplasm. Its subcellular location is the secreted. The protein localises to the cell surface. It carries out the reaction (2R)-2-phosphoglycerate = phosphoenolpyruvate + H2O. It functions in the pathway carbohydrate degradation; glycolysis; pyruvate from D-glyceraldehyde 3-phosphate: step 4/5. Catalyzes the reversible conversion of 2-phosphoglycerate (2-PG) into phosphoenolpyruvate (PEP). It is essential for the degradation of carbohydrates via glycolysis. This Brucella abortus (strain S19) protein is Enolase.